A 675-amino-acid polypeptide reads, in one-letter code: Methionine--tRNA ligase (675 aa).

The 'HIGH' region motif lies at 15–25 (PYANGSIHLGH). Zn(2+) is bound by residues Cys146, Cys149, Cys159, and Cys162. The 'KMSKS' region motif lies at 332-336 (KMSKS). Lys335 provides a ligand contact to ATP. The tRNA-binding domain maps to 573–675 (DFAKVDMRIA…SGAQPGMQVK (103 aa)).

Belongs to the class-I aminoacyl-tRNA synthetase family. MetG type 1 subfamily. Homodimer. Zn(2+) serves as cofactor.

Its subcellular location is the cytoplasm. It catalyses the reaction tRNA(Met) + L-methionine + ATP = L-methionyl-tRNA(Met) + AMP + diphosphate. Is required not only for elongation of protein synthesis but also for the initiation of all mRNA translation through initiator tRNA(fMet) aminoacylation. This is Methionine--tRNA ligase from Serratia proteamaculans (strain 568).